The following is a 266-amino-acid chain: Vitamin B12-binding protein (266 aa).

A signal peptide spans 1–22; the sequence is MAKQMFRALGALLLTLPVWLYA. Positions 25-266 constitute a Fe/B12 periplasmic-binding domain; sequence RVITLSPANT…QLCNALSQVN (242 aa). Cyanocob(III)alamin contacts are provided by residues Tyr50 and 242-246; that span reads DWFER. Residues Cys183 and Cys259 are joined by a disulfide bond.

It belongs to the BtuF family. In terms of assembly, the complex is composed of two ATP-binding proteins (BtuD), two transmembrane proteins (BtuC) and a solute-binding protein (BtuF).

Its subcellular location is the periplasm. Functionally, part of the ABC transporter complex BtuCDF involved in vitamin B12 import. Binds vitamin B12 and delivers it to the periplasmic surface of BtuC. This Salmonella typhi protein is Vitamin B12-binding protein.